A 181-amino-acid polypeptide reads, in one-letter code: Oligoribonuclease (181 aa).

In terms of domain architecture, Exonuclease spans 8 to 171; it reads LIWIDLEMTG…DDIRESVAEL (164 aa). Y129 is an active-site residue.

The protein belongs to the oligoribonuclease family.

It is found in the cytoplasm. Its function is as follows. 3'-to-5' exoribonuclease specific for small oligoribonucleotides. The chain is Oligoribonuclease from Enterobacter sp. (strain 638).